The chain runs to 135 residues: Putative large ribosomal subunit protein eL32' (135 aa).

This sequence belongs to the eukaryotic ribosomal protein eL32 family.

The chain is Putative large ribosomal subunit protein eL32' (Rpl32-ps) from Mus musculus (Mouse).